A 428-amino-acid chain; its full sequence is Tryptophan synthase beta chain (428 aa).

An N6-(pyridoxal phosphate)lysine modification is found at Lys100.

It belongs to the TrpB family. Tetramer of two alpha and two beta chains. Requires pyridoxal 5'-phosphate as cofactor.

The catalysed reaction is (1S,2R)-1-C-(indol-3-yl)glycerol 3-phosphate + L-serine = D-glyceraldehyde 3-phosphate + L-tryptophan + H2O. It functions in the pathway amino-acid biosynthesis; L-tryptophan biosynthesis; L-tryptophan from chorismate: step 5/5. In terms of biological role, the beta subunit is responsible for the synthesis of L-tryptophan from indole and L-serine. This chain is Tryptophan synthase beta chain, found in Streptomyces griseus subsp. griseus (strain JCM 4626 / CBS 651.72 / NBRC 13350 / KCC S-0626 / ISP 5235).